The chain runs to 106 residues: MVYQIKDKADLNGQLTKASGKLVVLDFFATWCGPCKMISPKLAELSTQYADTVVVLKVDVDECEDIAMEYNISSMPTFVFLKNGVKVEEFAGANAQRLEDVIKANI.

The region spanning 2–106 (VYQIKDKADL…RLEDVIKANI (105 aa)) is the Thioredoxin domain. Residues Cys32 and Cys35 each act as nucleophile in the active site. Cys32 and Cys35 form a disulfide bridge.

This sequence belongs to the thioredoxin family.

In terms of biological role, participates in various redox reactions through the reversible oxidation of its active center dithiol to a disulfide and catalyzes dithiol-disulfide exchange reactions. As a reducing substrate of peroxiredoxin 1, thioredoxin 2 is preferred over thioredoxin 1. The chain is Thioredoxin-2 from Drosophila yakuba (Fruit fly).